The chain runs to 1058 residues: Isoleucine--tRNA ligase (1058 aa).

Residues 48–58 (PYTTGHIHLGT) carry the 'HIGH' region motif. Residues 596 to 600 (KMSKS) carry the 'KMSKS' region motif. K599 contributes to the ATP binding site.

It belongs to the class-I aminoacyl-tRNA synthetase family. IleS type 2 subfamily. As to quaternary structure, monomer. It depends on Zn(2+) as a cofactor.

The protein localises to the cytoplasm. It carries out the reaction tRNA(Ile) + L-isoleucine + ATP = L-isoleucyl-tRNA(Ile) + AMP + diphosphate. In terms of biological role, catalyzes the attachment of isoleucine to tRNA(Ile). As IleRS can inadvertently accommodate and process structurally similar amino acids such as valine, to avoid such errors it has two additional distinct tRNA(Ile)-dependent editing activities. One activity is designated as 'pretransfer' editing and involves the hydrolysis of activated Val-AMP. The other activity is designated 'posttransfer' editing and involves deacylation of mischarged Val-tRNA(Ile). The polypeptide is Isoleucine--tRNA ligase (Methanosarcina mazei (strain ATCC BAA-159 / DSM 3647 / Goe1 / Go1 / JCM 11833 / OCM 88) (Methanosarcina frisia)).